Here is a 436-residue protein sequence, read N- to C-terminus: MHIAVVGLSHRTAPVEIREKLSIPEQTMETSLQTLRGNDQVLEVSILSTCNRLEIYTLVRHPERGISAISDFLGQHSGLAAEDLSPHLFNFHHDEAVAHLMRVAAGLDSLVLGEGQILSQVKKMVRLGQEHKSMGPILNRLLTQAVSTGKRVRSETNLGTGAVSISSAAVELAQLKLGQAQGEDQLMTLESELVAVVGAGRMSRLLLQHLQAKGCSGVMLLNRTRQRAEDLSADFPELPVECRPLDDLNHCLSTCSLVFTSTAADDPIVDASLLKQLKRRSFLRLIDIGVPRNIASDVVDLPGVESHDVDDLHEVVSRNQEARQQMAKEAEVVLQEETRLFLEWWDSLEAVPTINRLRATLEAIRAEELQKALSRMGPDFSARERKVVEALSKGIINKILHTPVTQLRAPQARQERQQALRVVACLFELDPPLEDG.

Substrate contacts are provided by residues 49–52 (TCNR), serine 109, 114–116 (EGQ), and glutamine 120. The Nucleophile role is filled by cysteine 50. 198-203 (GAGRMS) serves as a coordination point for NADP(+).

This sequence belongs to the glutamyl-tRNA reductase family. In terms of assembly, homodimer.

The enzyme catalyses (S)-4-amino-5-oxopentanoate + tRNA(Glu) + NADP(+) = L-glutamyl-tRNA(Glu) + NADPH + H(+). It participates in porphyrin-containing compound metabolism; protoporphyrin-IX biosynthesis; 5-aminolevulinate from L-glutamyl-tRNA(Glu): step 1/2. It functions in the pathway porphyrin-containing compound metabolism; chlorophyll biosynthesis. In terms of biological role, catalyzes the NADPH-dependent reduction of glutamyl-tRNA(Glu) to glutamate 1-semialdehyde (GSA). The polypeptide is Glutamyl-tRNA reductase (Prochlorococcus marinus (strain MIT 9303)).